The following is a 190-amino-acid chain: Large ribosomal subunit protein bL9 (190 aa).

This sequence belongs to the bacterial ribosomal protein bL9 family.

Functionally, binds to the 23S rRNA. This chain is Large ribosomal subunit protein bL9, found in Methylorubrum populi (strain ATCC BAA-705 / NCIMB 13946 / BJ001) (Methylobacterium populi).